Consider the following 179-residue polypeptide: CDP-archaeol synthase (179 aa).

Helical transmembrane passes span 53 to 73 (FVGGVAGGVLTANLQYAIEKL), 88 to 108 (FTLTFLLAFGAMFGDLCGSFI), 120 to 140 (FLIVDQLMFLLVALLIASLYP), and 145 to 165 (LFTAEIIALAVIITPALHMGI).

This sequence belongs to the CDP-archaeol synthase family. Mg(2+) is required as a cofactor.

The protein localises to the cell membrane. The enzyme catalyses 2,3-bis-O-(geranylgeranyl)-sn-glycerol 1-phosphate + CTP + H(+) = CDP-2,3-bis-O-(geranylgeranyl)-sn-glycerol + diphosphate. The protein operates within membrane lipid metabolism; glycerophospholipid metabolism. In terms of biological role, catalyzes the formation of CDP-2,3-bis-(O-geranylgeranyl)-sn-glycerol (CDP-archaeol) from 2,3-bis-(O-geranylgeranyl)-sn-glycerol 1-phosphate (DGGGP) and CTP. This reaction is the third ether-bond-formation step in the biosynthesis of archaeal membrane lipids. Can use CTP or dCTP, but not ATP, GTP or TTP. The protein is CDP-archaeol synthase of Archaeoglobus fulgidus (strain ATCC 49558 / DSM 4304 / JCM 9628 / NBRC 100126 / VC-16).